A 267-amino-acid polypeptide reads, in one-letter code: Trehalose-phosphate phosphatase (267 aa).

Asp20 (nucleophile) is an active-site residue. Mg(2+) contacts are provided by Asp20, Asp22, and Asp198. Position 20–22 (20–22 (DLD)) interacts with substrate.

This sequence belongs to the trehalose phosphatase family. It depends on Mg(2+) as a cofactor.

The enzyme catalyses alpha,alpha-trehalose 6-phosphate + H2O = alpha,alpha-trehalose + phosphate. It participates in glycan biosynthesis; trehalose biosynthesis. Functionally, removes the phosphate from trehalose 6-phosphate to produce free trehalose. The chain is Trehalose-phosphate phosphatase (otsB) from Salmonella typhimurium (strain LT2 / SGSC1412 / ATCC 700720).